The following is a 40-amino-acid chain: Cell division inhibitor MciZ (40 aa).

Interacts with FtsZ. Binds to the C-terminal polymerization interface of FtsZ. Binds to FtsZ filaments.

With respect to regulation, highly effective in inhibiting polymerization at low and intermediate concentrations of GTP and only partially effective at high GTP concentrations. Functionally, blocks Z-ring formation in the mother cell during sporulation by inhibiting the polymerization of FtsZ. Binds to the minus end of FtsZ and functions as a filament-capping protein. At high concentrations, is capable of both capping and sequestration of FtsZ. Decreases the GTPase activity of FtsZ. This Bacillus subtilis (strain 168) protein is Cell division inhibitor MciZ.